Consider the following 28-residue polypeptide: 50 kDa venom protease (28 aa).

The protein belongs to the venom metalloproteinase (M12B) family. The cofactor is Zn(2+). In terms of tissue distribution, expressed by the venom gland.

The protein localises to the secreted. The protein is 50 kDa venom protease of Proatheris superciliaris (Lowland swamp viper).